The primary structure comprises 487 residues: Probable cytochrome P450 313a5 (487 aa).

Phosphotyrosine is present on Tyr-223. Cys-433 serves as a coordination point for heme.

The protein belongs to the cytochrome P450 family. It depends on heme as a cofactor.

It is found in the endoplasmic reticulum membrane. Its subcellular location is the microsome membrane. Functionally, may be involved in the metabolism of insect hormones and in the breakdown of synthetic insecticides. This is Probable cytochrome P450 313a5 (Cyp313a5) from Drosophila melanogaster (Fruit fly).